A 276-amino-acid polypeptide reads, in one-letter code: uncharacterized protein (276 aa).

Residues 20–137 (PVLIFIPGAN…PPINTFLPDS (118 aa)) enclose the AB hydrolase-1 domain. Residues 57-76 (GESELTEPLPDSASNPDSDY) form a disordered region.

The protein belongs to the AB hydrolase superfamily.

This is an uncharacterized protein from Staphylococcus aureus (strain COL).